The following is a 1436-amino-acid chain: tRNA (guanosine(18)-2'-O)-methyltransferase (1436 aa).

S-adenosyl-L-methionine contacts are provided by residues Leu1365–Gln1367, Gly1389, and Ile1409–Met1418.

This sequence belongs to the class IV-like SAM-binding methyltransferase superfamily. RNA methyltransferase TrmH family.

It localises to the cytoplasm. It carries out the reaction guanosine(18) in tRNA + S-adenosyl-L-methionine = 2'-O-methylguanosine(18) in tRNA + S-adenosyl-L-homocysteine + H(+). Functionally, S-adenosyl-L-methionine-dependent 2'-O-ribose methyltransferase that catalyzes the formation of 2'-O-methylguanosine at position 18 (Gm18) in various tRNAs. The polypeptide is tRNA (guanosine(18)-2'-O)-methyltransferase (Saccharomyces cerevisiae (strain ATCC 204508 / S288c) (Baker's yeast)).